The primary structure comprises 303 residues: Signal recognition particle receptor FtsY (303 aa).

GTP contacts are provided by residues 108-115 (GVNGVGKT), 190-194 (DTAGR), and 254-257 (TKLD).

It belongs to the GTP-binding SRP family. FtsY subfamily. Part of the signal recognition particle protein translocation system, which is composed of SRP and FtsY. SRP is a ribonucleoprotein composed of Ffh and a 4.5S RNA molecule.

The protein localises to the cell inner membrane. Its subcellular location is the cytoplasm. The catalysed reaction is GTP + H2O = GDP + phosphate + H(+). In terms of biological role, involved in targeting and insertion of nascent membrane proteins into the cytoplasmic membrane. Acts as a receptor for the complex formed by the signal recognition particle (SRP) and the ribosome-nascent chain (RNC). Interaction with SRP-RNC leads to the transfer of the RNC complex to the Sec translocase for insertion into the membrane, the hydrolysis of GTP by both Ffh and FtsY, and the dissociation of the SRP-FtsY complex into the individual components. The protein is Signal recognition particle receptor FtsY of Rickettsia prowazekii (strain Madrid E).